Reading from the N-terminus, the 582-residue chain is Mitogen-activated protein kinase 17 (582 aa).

The disordered stretch occupies residues 22 to 61 (SSSFHLTTTGDDTVKDLHDPRREDAEGDGWEEVHEGPESD). Basic and acidic residues predominate over residues 33–45 (DTVKDLHDPRRED). Positions 105–396 (YKVSEVIGKG…AEEALTDPYF (292 aa)) constitute a Protein kinase domain. Residues 111-119 (IGKGSYGVV) and K134 each bind ATP. D231 functions as the Proton acceptor in the catalytic mechanism. Residue T267 is modified to Phosphothreonine. The short motif at 267–269 (TDY) is the TXY element. Phosphotyrosine is present on Y269. Disordered stretches follow at residues 474–502 (EGVS…GNKH) and 542–582 (ISAS…QLKT). Residues 482–491 (SSPQLRQNAS) show a composition bias toward polar residues. The span at 493-502 (PRERAIGNKH) shows a compositional bias: basic and acidic residues. Over residues 557–572 (DQEDSLTESMDETADE) the composition is skewed to acidic residues.

The protein belongs to the protein kinase superfamily. CMGC Ser/Thr protein kinase family. MAP kinase subfamily. In terms of processing, dually phosphorylated on Thr-267 and Tyr-269, which activates the enzyme.

The catalysed reaction is L-seryl-[protein] + ATP = O-phospho-L-seryl-[protein] + ADP + H(+). It catalyses the reaction L-threonyl-[protein] + ATP = O-phospho-L-threonyl-[protein] + ADP + H(+). With respect to regulation, activated by threonine and tyrosine phosphorylation. The chain is Mitogen-activated protein kinase 17 (MPK17) from Oryza sativa subsp. japonica (Rice).